A 217-amino-acid chain; its full sequence is Thiopurine S-methyltransferase (217 aa).

S-adenosyl-L-methionine-binding residues include W11, L46, E67, and R122.

This sequence belongs to the class I-like SAM-binding methyltransferase superfamily. TPMT family.

Its subcellular location is the cytoplasm. It catalyses the reaction S-adenosyl-L-methionine + a thiopurine = S-adenosyl-L-homocysteine + a thiopurine S-methylether.. This is Thiopurine S-methyltransferase from Vibrio vulnificus (strain YJ016).